The primary structure comprises 304 residues: Chromo domain-containing protein cec-1 (304 aa).

The 59-residue stretch at 8–66 (YTVESILEHRKKKGKSEFYIKWLGYDHTHNSWEPKENIVDPTLIEAFFTREAARKAEIK) folds into the Chromo domain. Residues 63 to 73 (AEIKAKKDKMA) are compositionally biased toward basic and acidic residues. Disordered stretches follow at residues 63–235 (AEIK…EIQL) and 248–304 (VEPA…AIIE). A compositionally biased stretch (low complexity) spans 75-102 (GKKGASSKASASVSKASASTPARGAKAA). Residues 106-116 (PPKKSPPKRQR) show a composition bias toward basic residues. A compositionally biased stretch (basic and acidic residues) spans 122–141 (IRPDSDTDEEHSSADKKSKA). Acidic residues-rich tracts occupy residues 142–152 (EDEEEVEDDEE), 163–204 (EEPE…DVQL), and 212–233 (EEEE…EEEI). Over residues 248–292 (VEPAVATPEPSEPSSSEKAVVENGSSSAAAGNSASKPEVSAVEVV) the composition is skewed to low complexity. Positions 293–304 (TVEDDDDIAIIE) are enriched in acidic residues.

The protein resides in the nucleus. It is found in the chromosome. The sequence is that of Chromo domain-containing protein cec-1 (cec-1) from Caenorhabditis elegans.